A 216-amino-acid polypeptide reads, in one-letter code: Superoxide dismutase [Cu-Zn], chloroplastic (216 aa).

The N-terminal 62 residues, 1 to 62 (MACHSALAAV…ASPRSMVVVA (62 aa)), are a transit peptide targeting the chloroplast. The Cu cation site is built by His-108, His-110, and His-125. Residues Cys-119 and Cys-208 are joined by a disulfide bond. The Zn(2+) site is built by His-125, His-133, His-142, and Asp-145. Cu cation is bound at residue His-182.

It belongs to the Cu-Zn superoxide dismutase family. In terms of assembly, homotetramer. Cu cation serves as cofactor. Zn(2+) is required as a cofactor.

Its subcellular location is the plastid. The protein localises to the chloroplast. It catalyses the reaction 2 superoxide + 2 H(+) = H2O2 + O2. Functionally, destroys radicals which are normally produced within the cells and which are toxic to biological systems. The polypeptide is Superoxide dismutase [Cu-Zn], chloroplastic (SODCP) (Zantedeschia aethiopica (White calla lily)).